The sequence spans 93 residues: Ribonuclease P protein component 1 (93 aa).

Belongs to the eukaryotic/archaeal RNase P protein component 1 family. As to quaternary structure, consists of a catalytic RNA component and at least 4-5 protein subunits.

It localises to the cytoplasm. The catalysed reaction is Endonucleolytic cleavage of RNA, removing 5'-extranucleotides from tRNA precursor.. In terms of biological role, part of ribonuclease P, a protein complex that generates mature tRNA molecules by cleaving their 5'-ends. The sequence is that of Ribonuclease P protein component 1 from Methanosphaera stadtmanae (strain ATCC 43021 / DSM 3091 / JCM 11832 / MCB-3).